The following is a 521-amino-acid chain: Spermidine transporter DUR31 (521 aa).

The helical transmembrane segment at 11 to 31 (AIIYLSYAFMLATGLFLAWKF) threads the bilayer. N41 carries an N-linked (GlcNAc...) asparagine glycan. 12 helical membrane passes run 47–67 (IPLALNFVASAMGVGIITTYA), 79–99 (LVYTICGAIPIVGFAVVGPVI), 117–137 (FGMVTALYLSAFTCLTMFLFM), 156–176 (ALGAVIVECVVTTIYTFFGGF), 187–207 (GVCVLLLLIICAAGMGSYIEI), 227–247 (LVYILFVAIVTNDCFMSGFWL), 264–284 (IAAFVTFAICTLIGTTGFLAV), 310–330 (WLVAFVLIFCIVLSTCTFDSL), 354–374 (IMLILIMVPIVVLAVKVADNI), 377–397 (IYLIADLVSAAIIPSVFLGLA), 406–426 (GFDVMAGGLGALLGVFIFGTV), and 453–473 (FGAFVIAPVGGVIITLASAAL).

This sequence belongs to the sodium:solute symporter (SSF) (TC 2.A.21) family.

Its subcellular location is the membrane. The enzyme catalyses spermidine(in) = spermidine(out). Functionally, spermidine transporter that is also used by salivary gland-secreted histatin 5 (Hst 5) to enter into candidal cells. A major component of host nonimmune defense systems is salivary histatins, a family of small (3-4 kDa), histidine-rich, cationic proteins secreted by major salivary glands in humans and higher primates. Hst 5 is the most potent of the 12 histatin family members and has fungicidal activity against blastoconidial and filamentous forms of Candida albicans. DUR31 only functions under high concentrations of Hst 5. Hst 5 cojugates to spermidine to be uptaken by DUR31. The sequence is that of Spermidine transporter DUR31 from Candida albicans (strain SC5314 / ATCC MYA-2876) (Yeast).